Consider the following 157-residue polypeptide: Phosphopantetheine adenylyltransferase (157 aa).

Substrate is bound at residue T10. ATP-binding positions include 10-11 (TF) and H18. Residues K42, L74, and R88 each contribute to the substrate site. ATP contacts are provided by residues 89 to 91 (GLR), E99, and 124 to 130 (NAFISSS).

It belongs to the bacterial CoaD family. In terms of assembly, homohexamer. Mg(2+) serves as cofactor.

The protein localises to the cytoplasm. The catalysed reaction is (R)-4'-phosphopantetheine + ATP + H(+) = 3'-dephospho-CoA + diphosphate. It functions in the pathway cofactor biosynthesis; coenzyme A biosynthesis; CoA from (R)-pantothenate: step 4/5. Its activity is regulated as follows. Tightly binds to CoA, which is presumably a feedback inhibitor. Potently inhibited by D-amethopterin, which simultaneously occupies the 4'-phosphopantetheine- and ATP-binding sites; following treatment with D-amethopterin, H.pylori exhibits morphological characteristics associated with cell death, showing that D-amethopterin displays antimicrobial activity. Reversibly transfers an adenylyl group from ATP to 4'-phosphopantetheine, yielding dephospho-CoA (dPCoA) and pyrophosphate. In Helicobacter pylori (strain ATCC 700392 / 26695) (Campylobacter pylori), this protein is Phosphopantetheine adenylyltransferase.